The sequence spans 132 residues: Putative F-box protein At4g05620 (132 aa).

In terms of domain architecture, F-box spans 17–63 (QKKSLSLPHDVLVSCLAHVSRLHYSILSLVLKNFRSLIASPELYKTR).

In Arabidopsis thaliana (Mouse-ear cress), this protein is Putative F-box protein At4g05620.